Consider the following 418-residue polypeptide: Serine proteinase inhibitor 2.4 (418 aa).

Residues 1 to 28 form the signal peptide; the sequence is MAFIAALGIFMAGICPAVLCFPNGTLGR. Residues Asn23, Asn38, Asn104, and Asn269 are each glycosylated (N-linked (GlcNAc...) asparagine).

It belongs to the serpin family.

Its subcellular location is the secreted. This is Serine proteinase inhibitor 2.4 from Apodemus sylvaticus (European woodmouse).